The primary structure comprises 200 residues: Phospholipase A2 inhibitor gamma subunit B (200 aa).

A signal peptide spans 1-19; it reads MKFLLFCCLFGTFLATGMC. Intrachain disulfides connect C22/C46, C25/C32, C39/C67, C73/C94, C95/C100, C120/C145, C138/C165, and C171/C191.

Belongs to the CNF-like-inhibitor family. As to quaternary structure, heteromer composed of subunit A and subunit B.

It localises to the secreted. Its function is as follows. Inhibits the enzymatic activity of the phospholipase A2 (PLA2). This is Phospholipase A2 inhibitor gamma subunit B from Elaphe climacophora (Japanese rat snake).